Reading from the N-terminus, the 74-residue chain is Protein WFDC9 (74 aa).

Residues 1-19 (MKFWILLLTVSAHGIVVFL) form the signal peptide.

It is found in the secreted. The protein is Protein WFDC9 (Wfdc9) of Rattus norvegicus (Rat).